Here is a 168-residue protein sequence, read N- to C-terminus: Small ribosomal subunit protein uS5 (168 aa).

Positions 17-80 (IEDQLVAVNR…EDGKKKMINV (64 aa)) constitute an S5 DRBM domain.

Belongs to the universal ribosomal protein uS5 family. As to quaternary structure, part of the 30S ribosomal subunit. Contacts proteins S4 and S8.

With S4 and S12 plays an important role in translational accuracy. In terms of biological role, located at the back of the 30S subunit body where it stabilizes the conformation of the head with respect to the body. In Lactobacillus acidophilus (strain ATCC 700396 / NCK56 / N2 / NCFM), this protein is Small ribosomal subunit protein uS5.